Reading from the N-terminus, the 1217-residue chain is ATP-dependent helicase/nuclease subunit A (1217 aa).

Residues 10-475 (VIWTDAQWQS…IDLSQNFRSR (466 aa)) form the UvrD-like helicase ATP-binding domain. 31–38 (AAAGSGKT) contacts ATP. Positions 476–786 (KEVLSTTNYI…RMMTIHSSKG (311 aa)) constitute a UvrD-like helicase C-terminal domain.

This sequence belongs to the helicase family. AddA subfamily. Heterodimer of AddA and AddB/RexB. Mg(2+) is required as a cofactor.

It catalyses the reaction Couples ATP hydrolysis with the unwinding of duplex DNA by translocating in the 3'-5' direction.. The enzyme catalyses ATP + H2O = ADP + phosphate + H(+). In terms of biological role, the heterodimer acts as both an ATP-dependent DNA helicase and an ATP-dependent, dual-direction single-stranded exonuclease. Recognizes the chi site generating a DNA molecule suitable for the initiation of homologous recombination. The AddA nuclease domain is required for chi fragment generation; this subunit has the helicase and 3' -&gt; 5' nuclease activities. The protein is ATP-dependent helicase/nuclease subunit A of Staphylococcus aureus (strain USA300).